The sequence spans 235 residues: Large ribosomal subunit protein uL1 (235 aa).

The protein belongs to the universal ribosomal protein uL1 family. In terms of assembly, part of the 50S ribosomal subunit.

In terms of biological role, binds directly to 23S rRNA. The L1 stalk is quite mobile in the ribosome, and is involved in E site tRNA release. Functionally, protein L1 is also a translational repressor protein, it controls the translation of the L11 operon by binding to its mRNA. The protein is Large ribosomal subunit protein uL1 of Mycobacterium tuberculosis (strain ATCC 25177 / H37Ra).